A 726-amino-acid polypeptide reads, in one-letter code: Catalase-peroxidase (726 aa).

Positions 1 to 33 (MSTTDDTHNTLSTGKCPFHQGGHDRSAGAGTAS) are disordered. The tryptophyl-tyrosyl-methioninium (Trp-Tyr) (with M-252) cross-link spans 105-226 (WHGAGTYRSI…LGATEMGLIY (122 aa)). The Proton acceptor role is filled by His106. Positions 226–252 (YVNPEGPDHSGEPLSAAAAIRATFGNM) form a cross-link, tryptophyl-tyrosyl-methioninium (Tyr-Met) (with W-105). His267 is a heme b binding site.

This sequence belongs to the peroxidase family. Peroxidase/catalase subfamily. Homodimer or homotetramer. Heme b is required as a cofactor. In terms of processing, formation of the three residue Trp-Tyr-Met cross-link is important for the catalase, but not the peroxidase activity of the enzyme.

It carries out the reaction H2O2 + AH2 = A + 2 H2O. It catalyses the reaction 2 H2O2 = O2 + 2 H2O. In terms of biological role, bifunctional enzyme with both catalase and broad-spectrum peroxidase activity. This chain is Catalase-peroxidase, found in Salmonella typhi.